The chain runs to 313 residues: Short-chain dehydrogenase/reductase family 9C member 7 (313 aa).

Residue Phe29–Leu53 participates in NADP(+) binding. Residue Ser160 participates in substrate binding. The active-site Proton acceptor is Tyr172. A Phosphoserine modification is found at Ser185.

This sequence belongs to the short-chain dehydrogenases/reductases (SDR) family. Highly expressed in liver.

It localises to the cytoplasm. It catalyses the reaction a N-[omega-(9R,10R)-epoxy-(13R)-hydroxy-(11E)-octadecenoyloxy]acyl-beta-D-glucosyl-(1&lt;-&gt;1)-sphing-4E-enine + NAD(+) = a N-[omega-(9R,10R)-epoxy-13-oxo-(11E)-octadecenoyloxy]acyl-beta-D-glucosyl-(1&lt;-&gt;1)-sphing-4E-enine + NADH + H(+). The enzyme catalyses a N-[omega-(9R,10R)-epoxy-(13R)-hydroxy-(11E)-octadecenoyloxy]-acylsphing-4E-enine + NAD(+) = a N-[omega-(9R,10R)-epoxy-13-oxo-(11E)-octadecenoyloxy]-acylsphing-4E-enine + NADH + H(+). Functionally, plays a crucial role in the formation of the epidermal permeability barrier. Catalyzes the NAD+-dependent dehydrogenation of the linoleate 9,10-trans-epoxy-11E-13-alcohol esterified in omega-O-acylceramides (such as in N-[omega-(9R,10R)-epoxy-(13R)-hydroxy-(11E)-octadecenoyloxy]-acylsphing-4E-enine) to the corresponding 13-ketone, the reactive moiety required for binding of epidermal ceramides to proteins. Displays weak conversion of all-trans-retinal to all-trans-retinol in the presence of NADH. Has apparently no steroid dehydrogenase activity. This chain is Short-chain dehydrogenase/reductase family 9C member 7 (Sdr9c7), found in Mus musculus (Mouse).